A 295-amino-acid polypeptide reads, in one-letter code: NAD kinase (295 aa).

The active-site Proton acceptor is the aspartate 74. NAD(+) is bound by residues 74–75 (DG), 148–149 (ND), histidine 159, arginine 176, aspartate 178, and 189–194 (TAYALS).

Belongs to the NAD kinase family. Requires a divalent metal cation as cofactor.

The protein resides in the cytoplasm. The enzyme catalyses NAD(+) + ATP = ADP + NADP(+) + H(+). In terms of biological role, involved in the regulation of the intracellular balance of NAD and NADP, and is a key enzyme in the biosynthesis of NADP. Catalyzes specifically the phosphorylation on 2'-hydroxyl of the adenosine moiety of NAD to yield NADP. In Legionella pneumophila (strain Paris), this protein is NAD kinase.